Here is a 72-residue protein sequence, read N- to C-terminus: DNA-directed RNA polymerase subunit omega (72 aa).

It belongs to the RNA polymerase subunit omega family. As to quaternary structure, the RNAP catalytic core consists of 2 alpha, 1 beta, 1 beta' and 1 omega subunit. When a sigma factor is associated with the core the holoenzyme is formed, which can initiate transcription.

The enzyme catalyses RNA(n) + a ribonucleoside 5'-triphosphate = RNA(n+1) + diphosphate. Its function is as follows. Promotes RNA polymerase assembly. Latches the N- and C-terminal regions of the beta' subunit thereby facilitating its interaction with the beta and alpha subunits. The sequence is that of DNA-directed RNA polymerase subunit omega from Clostridium botulinum (strain Langeland / NCTC 10281 / Type F).